We begin with the raw amino-acid sequence, 310 residues long: Haloalkane dehalogenase (310 aa).

Residues 30–140 (PVVLFLHGNP…PMPTWQDFHH (111 aa)) enclose the AB hydrolase-1 domain. The active-site Nucleophile is the Asp103. Glu127 (proton donor) is an active-site residue. The active-site Proton acceptor is the His280.

It belongs to the haloalkane dehalogenase family. Type 2 subfamily. In terms of assembly, monomer.

It catalyses the reaction 1-haloalkane + H2O = a halide anion + a primary alcohol + H(+). Its function is as follows. Catalyzes hydrolytic cleavage of carbon-halogen bonds in halogenated aliphatic compounds, leading to the formation of the corresponding primary alcohols, halide ions and protons. This is Haloalkane dehalogenase from Bradyrhizobium diazoefficiens (strain JCM 10833 / BCRC 13528 / IAM 13628 / NBRC 14792 / USDA 110).